A 195-amino-acid chain; its full sequence is Cytochrome c oxidase subunit 1 (195 aa).

Residues 12–32 (MYWVLGFIFLFTLGGLTGIVL) traverse the membrane as a helical segment. Mg(2+)-binding residues include His42 and Asp43. Residue His50 participates in heme a3 binding. His52 is a binding site for Fe(II)-heme a. Transmembrane regions (helical) follow at residues 59-79 (AVFAIFAGFNFWFPVMTGLVL), 88-108 (FIVMFIAVNMTFFPQHFLGLA), and 131-151 (GSLMSVFAVLLFVLIVWEAFL).

Belongs to the heme-copper respiratory oxidase family. In terms of assembly, component of the cytochrome c oxidase (complex IV, CIV), a multisubunit enzyme composed of a catalytic core of 3 subunits and several supernumerary subunits. The complex exists as a monomer or a dimer and forms supercomplexes (SCs) in the inner mitochondrial membrane with ubiquinol-cytochrome c oxidoreductase (cytochrome b-c1 complex, complex III, CIII). It depends on heme as a cofactor. The cofactor is Cu cation.

It is found in the mitochondrion inner membrane. It catalyses the reaction 4 Fe(II)-[cytochrome c] + O2 + 8 H(+)(in) = 4 Fe(III)-[cytochrome c] + 2 H2O + 4 H(+)(out). Its pathway is energy metabolism; oxidative phosphorylation. Component of the cytochrome c oxidase, the last enzyme in the mitochondrial electron transport chain which drives oxidative phosphorylation. The respiratory chain contains 3 multisubunit complexes succinate dehydrogenase (complex II, CII), ubiquinol-cytochrome c oxidoreductase (cytochrome b-c1 complex, complex III, CIII) and cytochrome c oxidase (complex IV, CIV), that cooperate to transfer electrons derived from NADH and succinate to molecular oxygen, creating an electrochemical gradient over the inner membrane that drives transmembrane transport and the ATP synthase. Cytochrome c oxidase is the component of the respiratory chain that catalyzes the reduction of oxygen to water. Electrons originating from reduced cytochrome c in the intermembrane space (IMS) are transferred via the dinuclear copper A center (CU(A)) of subunit 2 and heme A of subunit 1 to the active site in subunit 1, a binuclear center (BNC) formed by heme A3 and copper B (CU(B)). The BNC reduces molecular oxygen to 2 water molecules using 4 electrons from cytochrome c in the IMS and 4 protons from the mitochondrial matrix. The polypeptide is Cytochrome c oxidase subunit 1 (COI) (Albinaria turrita (Door snail)).